Consider the following 320-residue polypeptide: Cyclin-H (320 aa).

S5 carries the phosphoserine; by CDK8 modification. S132 is modified (phosphoserine). S304 carries the phosphoserine; by CDK8 modification.

It belongs to the cyclin family. Cyclin C subfamily. In terms of assembly, associates primarily with CDK7 and MAT1 to form the CAK complex. CAK can further associate with the core-TFIIH to form the TFIIH basal transcription factor.

The protein resides in the nucleus. In terms of biological role, regulates CDK7, the catalytic subunit of the CDK-activating kinase (CAK) enzymatic complex. CAK activates the cyclin-associated kinases CDK1, CDK2, CDK4 and CDK6 by threonine phosphorylation. CAK complexed to the core-TFIIH basal transcription factor activates RNA polymerase II by serine phosphorylation of the repetitive C-terminal domain (CTD) of its large subunit (POLR2A), allowing its escape from the promoter and elongation of the transcripts. Involved in cell cycle control and in RNA transcription by RNA polymerase II. Its expression and activity are constant throughout the cell cycle. This chain is Cyclin-H (CCNH), found in Bos taurus (Bovine).